The following is a 114-amino-acid chain: Hydrogenase maturation factor HypA (114 aa).

Residue His-2 participates in Ni(2+) binding. Zn(2+) contacts are provided by Cys-73, Cys-76, Cys-89, and Cys-92.

The protein belongs to the HypA/HybF family.

Its function is as follows. Involved in the maturation of [NiFe] hydrogenases. Required for nickel insertion into the metal center of the hydrogenase. This is Hydrogenase maturation factor HypA from Desulfitobacterium hafniense (strain DSM 10664 / DCB-2).